The sequence spans 48 residues: ATP synthase protein 8 (48 aa).

The chain crosses the membrane as a helical span at residues 12-32 (LLTFGMLAISMLLYLVSTIIL).

The protein belongs to the ATPase protein 8 family. F-type ATPases have 2 components, CF(1) - the catalytic core - and CF(0) - the membrane proton channel.

It localises to the mitochondrion membrane. Mitochondrial membrane ATP synthase (F(1)F(0) ATP synthase or Complex V) produces ATP from ADP in the presence of a proton gradient across the membrane which is generated by electron transport complexes of the respiratory chain. F-type ATPases consist of two structural domains, F(1) - containing the extramembraneous catalytic core and F(0) - containing the membrane proton channel, linked together by a central stalk and a peripheral stalk. During catalysis, ATP synthesis in the catalytic domain of F(1) is coupled via a rotary mechanism of the central stalk subunits to proton translocation. Part of the complex F(0) domain. Minor subunit located with subunit a in the membrane. The polypeptide is ATP synthase protein 8 (ATP8) (Debaryomyces hansenii (strain ATCC 36239 / CBS 767 / BCRC 21394 / JCM 1990 / NBRC 0083 / IGC 2968) (Yeast)).